The primary structure comprises 264 residues: Thymidylate synthase (264 aa).

Arg-21 contacts dUMP. His-51 provides a ligand contact to (6R)-5,10-methylene-5,6,7,8-tetrahydrofolate. 126–127 contributes to the dUMP binding site; that stretch reads RR. Cys-146 acts as the Nucleophile in catalysis. DUMP contacts are provided by residues 166–169, Asn-177, and 207–209; these read RSAD and HIY. Asp-169 provides a ligand contact to (6R)-5,10-methylene-5,6,7,8-tetrahydrofolate. Ala-263 lines the (6R)-5,10-methylene-5,6,7,8-tetrahydrofolate pocket.

Belongs to the thymidylate synthase family. Bacterial-type ThyA subfamily. As to quaternary structure, homodimer.

The protein resides in the cytoplasm. It catalyses the reaction dUMP + (6R)-5,10-methylene-5,6,7,8-tetrahydrofolate = 7,8-dihydrofolate + dTMP. The protein operates within pyrimidine metabolism; dTTP biosynthesis. Catalyzes the reductive methylation of 2'-deoxyuridine-5'-monophosphate (dUMP) to 2'-deoxythymidine-5'-monophosphate (dTMP) while utilizing 5,10-methylenetetrahydrofolate (mTHF) as the methyl donor and reductant in the reaction, yielding dihydrofolate (DHF) as a by-product. This enzymatic reaction provides an intracellular de novo source of dTMP, an essential precursor for DNA biosynthesis. The polypeptide is Thymidylate synthase (Bacteroides thetaiotaomicron (strain ATCC 29148 / DSM 2079 / JCM 5827 / CCUG 10774 / NCTC 10582 / VPI-5482 / E50)).